A 151-amino-acid chain; its full sequence is 3-hydroxyacyl-[acyl-carrier-protein] dehydratase FabZ (151 aa).

His-49 is a catalytic residue.

This sequence belongs to the thioester dehydratase family. FabZ subfamily.

The protein resides in the cytoplasm. The enzyme catalyses a (3R)-hydroxyacyl-[ACP] = a (2E)-enoyl-[ACP] + H2O. Its function is as follows. Involved in unsaturated fatty acids biosynthesis. Catalyzes the dehydration of short chain beta-hydroxyacyl-ACPs and long chain saturated and unsaturated beta-hydroxyacyl-ACPs. The polypeptide is 3-hydroxyacyl-[acyl-carrier-protein] dehydratase FabZ (Bordetella petrii (strain ATCC BAA-461 / DSM 12804 / CCUG 43448)).